Here is a 376-residue protein sequence, read N- to C-terminus: MLNTARLDNPAVIFDNGSGLCKVGISGEIVPRHVINSVVGHPKFNIPSARSNRKRYFVGEEAQCMYDGLYLHYPIERGLVTRWDDMEKLWKDLFEWELGVKPNEQPVFMTEPSLNPRETREKTTEIMFEKFNVPALYLCNHAVGALCASACITGLVLDSGDGVTCTVPIYEGYSLPRAITKLYVAGRDITEHLTRLLLAKGYTFPCILNKAVVDDIKEKLCTVSWGSKDSEKCYQRSLSEYKLPDGNTIQMSDHLCQVPEVLFTPEHLGIHDLGISKMVCNSIMKCDTDIQENLFAEIVLSGGTTLFPGLQDRLLKELEVLAFEGTPIKITASPDRCYSAWIGGSVMTSLTTFKQMWVTAEDFKEYGAFVVQRKCF.

This sequence belongs to the actin family.

The protein resides in the cytoplasm. Its subcellular location is the cytoskeleton. It is found in the nucleus. The protein localises to the cytoplasmic vesicle. It localises to the secretory vesicle. The protein resides in the acrosome. In terms of biological role, negatively regulates the Hedgehog (SHH) signaling. Binds to the promoter of the SHH signaling mediator, GLI1, and inhibits its expression. The protein is Actin-related protein T1 (Actrt1) of Rattus norvegicus (Rat).